The following is a 220-amino-acid chain: Thiopurine S-methyltransferase (220 aa).

4 residues coordinate S-adenosyl-L-methionine: Trp10, Leu45, Glu66, and Arg123.

It belongs to the class I-like SAM-binding methyltransferase superfamily. TPMT family.

It localises to the cytoplasm. It carries out the reaction S-adenosyl-L-methionine + a thiopurine = S-adenosyl-L-homocysteine + a thiopurine S-methylether.. The polypeptide is Thiopurine S-methyltransferase (Nitrosospira multiformis (strain ATCC 25196 / NCIMB 11849 / C 71)).